We begin with the raw amino-acid sequence, 652 residues long: Beta-glucuronidase (652 aa).

The first 22 residues, 1–22 (MVRGPAGAWAVLGPLLWGCGLA), serve as a signal peptide directing secretion. N-linked (GlcNAc...) asparagine glycosylation is found at Asn-173 and Asn-420. The Proton donor role is filled by Glu-451. An N-linked (GlcNAc...) asparagine glycan is attached at Asn-631.

The protein belongs to the glycosyl hydrolase 2 family. Homotetramer.

The protein resides in the lysosome. The catalysed reaction is a beta-D-glucuronoside + H2O = D-glucuronate + an alcohol. Inhibited by L-aspartic acid. Plays an important role in the degradation of dermatan and keratan sulfates. The sequence is that of Beta-glucuronidase (GUSB) from Sus scrofa (Pig).